The chain runs to 528 residues: Biotin carboxylase 1, chloroplastic (528 aa).

A chloroplast-targeting transit peptide spans 1–51; the sequence is MEATLPVCKSVTSTPGLFMGKTSGIRSSQCSFMMGNKVNFPRQRAQTAHVH. ATP-binding positions include K179, K221, 227–228, 263–266, and H271; these read GG and EKYV. The 198-residue stretch at 183 to 380 folds into the ATP-grasp domain; it reads RETMKKAGVP…LIEEQIRVAM (198 aa). K300 serves as a coordination point for hydrogencarbonate. E338 and E351 together coordinate ATP. E338, E351, and N353 together coordinate Mg(2+). Mn(2+)-binding residues include E338, E351, and N353. Positions 355, 358, and 401 each coordinate hydrogencarbonate. Residue R355 is part of the active site. Residue R401 participates in biotin binding.

In terms of assembly, acetyl-CoA carboxylase is a heterohexamer composed of biotin carboxyl carrier protein, biotin carboxylase and two subunits each of ACCase subunit alpha and ACCase plastid-coded subunit beta (accD). The cofactor is Mg(2+). It depends on Mn(2+) as a cofactor.

Its subcellular location is the plastid. The protein resides in the chloroplast. It carries out the reaction N(6)-biotinyl-L-lysyl-[protein] + hydrogencarbonate + ATP = N(6)-carboxybiotinyl-L-lysyl-[protein] + ADP + phosphate + H(+). Its pathway is lipid metabolism; malonyl-CoA biosynthesis; malonyl-CoA from acetyl-CoA: step 1/1. Functionally, this protein is a component of the acetyl coenzyme A carboxylase complex; first, biotin carboxylase catalyzes the carboxylation of the carrier protein and then the transcarboxylase transfers the carboxyl group to form malonyl-CoA. The chain is Biotin carboxylase 1, chloroplastic from Populus trichocarpa (Western balsam poplar).